Reading from the N-terminus, the 558-residue chain is Formate--tetrahydrofolate ligase (558 aa).

Threonine 65–threonine 72 is an ATP binding site.

Belongs to the formate--tetrahydrofolate ligase family.

It carries out the reaction (6S)-5,6,7,8-tetrahydrofolate + formate + ATP = (6R)-10-formyltetrahydrofolate + ADP + phosphate. The protein operates within one-carbon metabolism; tetrahydrofolate interconversion. The chain is Formate--tetrahydrofolate ligase from Methylobacterium nodulans (strain LMG 21967 / CNCM I-2342 / ORS 2060).